The primary structure comprises 532 residues: Bone morphogenetic protein receptor type-1A (532 aa).

Residues 1–23 form the signal peptide; the sequence is MPQLYIYIRLLGAYLFIISRVQG. At 24–152 the chain is on the extracellular side; the sequence is QNLDSMLHGT…IGPFFDGSIR (129 aa). 3 cysteine pairs are disulfide-bonded: C61/C82, C63/C67, and C76/C100. N-linked (GlcNAc...) asparagine glycosylation is present at N73. Residues 107-109 form a mediates specificity for BMP ligand region; it reads DFQ. 2 disulfide bridges follow: C110/C124 and C125/C130. The helical transmembrane segment at 153-176 threads the bilayer; that stretch reads WLVLLISMAVCIIAMIIFSSCFCY. At 177 to 532 the chain is on the cytoplasmic side; that stretch reads KHYCKSISSR…KMVESQDVKI (356 aa). One can recognise a GS domain in the interval 204–233; the sequence is ESLKDLIDQSQSSGSGSGLPLLVQRTIAKQ. One can recognise a Protein kinase domain in the interval 234 to 525; the sequence is IQMVRQVGKG…RIKKTLAKMV (292 aa). ATP-binding positions include 240–248 and K261; that span reads VGKGRYGEV. D362 functions as the Proton acceptor in the catalytic mechanism.

It belongs to the protein kinase superfamily. TKL Ser/Thr protein kinase family. TGFB receptor subfamily. As to quaternary structure, interacts with low affinity with GDF5; positively regulates chondrocyte differentiation. Interacts with BMP4. Interacts with SCUBE3. Interacts with TSC22D1/TSC-22. Interacts with BMP2; the interaction may induce HAMP expression. Interacts with BMP6. Interacts with heterodimers composed of BMP2 and BMP6 in vitro; the interaction may induce HAMP expression. Interacts with TGFBR3. It depends on Mg(2+) as a cofactor. Requires Mn(2+) as cofactor. In terms of processing, glycosylated. In terms of tissue distribution, highly expressed in skeletal muscle.

It localises to the cell membrane. It is found in the cell surface. The enzyme catalyses L-threonyl-[receptor-protein] + ATP = O-phospho-L-threonyl-[receptor-protein] + ADP + H(+). The catalysed reaction is L-seryl-[receptor-protein] + ATP = O-phospho-L-seryl-[receptor-protein] + ADP + H(+). On ligand binding, forms a receptor complex consisting of two type II and two type I transmembrane serine/threonine kinases. Type II receptors phosphorylate and activate type I receptors which autophosphorylate, then bind and activate SMAD transcriptional regulators. Receptor for BMP2, BMP4, GDF5 and GDF6. Positively regulates chondrocyte differentiation through GDF5 interaction. Mediates induction of adipogenesis by GDF6. May promote the expression of HAMP, potentially via its interaction with BMP2. In Homo sapiens (Human), this protein is Bone morphogenetic protein receptor type-1A (BMPR1A).